Reading from the N-terminus, the 512-residue chain is Mesoderm induction early response protein 1 (512 aa).

Positions 1-16 (MAEPSVESSSPGGSAT) are enriched in low complexity. Disordered regions lie at residues 1-63 (MAEP…REGD) and 75-173 (YGST…EDYI). Ser10 carries the phosphoserine modification. A compositionally biased stretch (basic and acidic residues) spans 17 to 36 (SDDHEFDPSADMLVHDFDDE). Acidic residues-rich tracts occupy residues 37 to 46 (RTLEEEEMME) and 83 to 105 (EEDEEEEEEEEEGEDDEDADNDD). Polar residues predominate over residues 129-144 (QSSNDDPSQSVASQDA). Ser141 is subject to Phosphoserine. Position 155 is a phosphotyrosine (Tyr155). Ser160 and Ser166 each carry phosphoserine. Residues 160-173 (SEVEEESEEDEDYI) are compositionally biased toward acidic residues. The ELM2 domain occupies 180-278 (KEIMVGSMFQ…EALRRLRFNV (99 aa)). The interaction with HDAC1 stretch occupies residues 180–284 (KEIMVGSMFQ…RFNVKAAREE (105 aa)). Lys239 is covalently cross-linked (Glycyl lysine isopeptide (Lys-Gly) (interchain with G-Cter in SUMO2)). In terms of domain architecture, SANT spans 283-335 (EELSVWTEEECRNFEQGLKAYGKDFHLIQANKVRTRSVGECVAFYYMWKKSER). A disordered region spans residues 366-512 (ESESAASSRA…KFEELENTDD (147 aa)). Residues Ser367, Ser369, and Ser377 each carry the phosphoserine modification. Residues 396–409 (TVSTTNQNGVSSNG) are compositionally biased toward polar residues. Residues 414–423 (LNKEEVKVEG) show a composition bias toward basic and acidic residues. Residue Lys420 forms a Glycyl lysine isopeptide (Lys-Gly) (interchain with G-Cter in SUMO2) linkage. Thr448 carries the phosphothreonine modification. The span at 462–475 (ARNENDFDEKSERP) shows a compositional bias: basic and acidic residues. The span at 482–494 (NSNGKESPGSSEF) shows a compositional bias: polar residues. Phosphoserine is present on residues Ser483, Ser488, and Ser491.

In terms of assembly, interacts with HDAC1. Part of a complex containing at least CDYL, MIER1, MIER2, HDAC1 and HDAC2.

The protein resides in the nucleus. Functionally, transcriptional repressor regulating the expression of a number of genes including SP1 target genes. Probably functions through recruitment of HDAC1 a histone deacetylase involved in chromatin silencing. This chain is Mesoderm induction early response protein 1 (MIER1), found in Pongo abelii (Sumatran orangutan).